The primary structure comprises 313 residues: MAALQHLTGLCGMSAGTLSGLLDKTEGFKKELTAPAPSFSPSLQGRRIALVFFENSTRTRFSFELAARNLGASTLGFSASTSSVTKGETLSDTIKNLEAMQVDAFVLRHPSSGSAEFISGITKKPVVNAGDGANEHPTQALLDMFTLREHFGTLKAIKVAIIGDVLHSRVARSNIHGLLTMGAEVGLCSPVTLLPPDSEKLGVSLFTDLDQALGWADAALVLRLQLERATGGYLPSLQEYSVHYGLTDERLERTARHLLVLHPGPINREIEISNRVADRIQPPGYSKSMLLEQVTNGVAVRMAVLQTLLADTP.

Carbamoyl phosphate-binding residues include Arg58 and Thr59. Lys86 is an L-aspartate binding site. Residues Arg108, His136, and Gln139 each coordinate carbamoyl phosphate. 2 residues coordinate L-aspartate: Arg169 and Arg223. The carbamoyl phosphate site is built by Gly264 and Pro265.

The protein belongs to the aspartate/ornithine carbamoyltransferase superfamily. ATCase family. Heterododecamer (2C3:3R2) of six catalytic PyrB chains organized as two trimers (C3), and six regulatory PyrI chains organized as three dimers (R2).

The catalysed reaction is carbamoyl phosphate + L-aspartate = N-carbamoyl-L-aspartate + phosphate + H(+). It participates in pyrimidine metabolism; UMP biosynthesis via de novo pathway; (S)-dihydroorotate from bicarbonate: step 2/3. Catalyzes the condensation of carbamoyl phosphate and aspartate to form carbamoyl aspartate and inorganic phosphate, the committed step in the de novo pyrimidine nucleotide biosynthesis pathway. In Chlorobium luteolum (strain DSM 273 / BCRC 81028 / 2530) (Pelodictyon luteolum), this protein is Aspartate carbamoyltransferase catalytic subunit.